Reading from the N-terminus, the 351-residue chain is Histidinol-phosphate aminotransferase (351 aa).

N6-(pyridoxal phosphate)lysine is present on Lys213.

The protein belongs to the class-II pyridoxal-phosphate-dependent aminotransferase family. Histidinol-phosphate aminotransferase subfamily. As to quaternary structure, homodimer. Pyridoxal 5'-phosphate serves as cofactor.

It catalyses the reaction L-histidinol phosphate + 2-oxoglutarate = 3-(imidazol-4-yl)-2-oxopropyl phosphate + L-glutamate. Its pathway is amino-acid biosynthesis; L-histidine biosynthesis; L-histidine from 5-phospho-alpha-D-ribose 1-diphosphate: step 7/9. The sequence is that of Histidinol-phosphate aminotransferase from Thermoanaerobacter pseudethanolicus (strain ATCC 33223 / 39E) (Clostridium thermohydrosulfuricum).